Consider the following 171-residue polypeptide: Peptide deformylase (171 aa).

Residues Cys91 and His133 each coordinate Fe cation. The active site involves Glu134. His137 serves as a coordination point for Fe cation.

This sequence belongs to the polypeptide deformylase family. Fe(2+) serves as cofactor.

It catalyses the reaction N-terminal N-formyl-L-methionyl-[peptide] + H2O = N-terminal L-methionyl-[peptide] + formate. Removes the formyl group from the N-terminal Met of newly synthesized proteins. Requires at least a dipeptide for an efficient rate of reaction. N-terminal L-methionine is a prerequisite for activity but the enzyme has broad specificity at other positions. This is Peptide deformylase from Sodalis glossinidius (strain morsitans).